The chain runs to 509 residues: 2-isopropylmalate synthase (509 aa).

In terms of domain architecture, Pyruvate carboxyltransferase spans 5–267; the sequence is IQIFDTTLRD…QTALNLEETK (263 aa). Mn(2+)-binding residues include Asp-14, His-202, His-204, and Asn-238. A regulatory domain region spans residues 391–509; sequence KLETLQLQYV…AAENVEKVGN (119 aa).

Belongs to the alpha-IPM synthase/homocitrate synthase family. LeuA type 1 subfamily. As to quaternary structure, homodimer. Mn(2+) is required as a cofactor.

It localises to the cytoplasm. It catalyses the reaction 3-methyl-2-oxobutanoate + acetyl-CoA + H2O = (2S)-2-isopropylmalate + CoA + H(+). The protein operates within amino-acid biosynthesis; L-leucine biosynthesis; L-leucine from 3-methyl-2-oxobutanoate: step 1/4. Its function is as follows. Catalyzes the condensation of the acetyl group of acetyl-CoA with 3-methyl-2-oxobutanoate (2-ketoisovalerate) to form 3-carboxy-3-hydroxy-4-methylpentanoate (2-isopropylmalate). The protein is 2-isopropylmalate synthase of Staphylococcus aureus (strain USA300).